The following is a 114-amino-acid chain: T cell receptor beta variable 19 (114 aa).

Positions M1–G21 are cleaved as a signal peptide. In terms of domain architecture, Ig-like spans G22–I114. N37 carries N-linked (GlcNAc...) asparagine glycosylation. An intrachain disulfide couples C42 to C110.

In terms of assembly, alpha-beta TR is a heterodimer composed of an alpha and beta chain; disulfide-linked. The alpha-beta TR is associated with the transmembrane signaling CD3 coreceptor proteins to form the TR-CD3 (TcR or TCR). The assembly of alpha-beta TR heterodimers with CD3 occurs in the endoplasmic reticulum where a single alpha-beta TR heterodimer associates with one CD3D-CD3E heterodimer, one CD3G-CD3E heterodimer and one CD247 homodimer forming a stable octameric structure. CD3D-CD3E and CD3G-CD3E heterodimers preferentially associate with TR alpha and TR beta chains, respectively. The association of the CD247 homodimer is the last step of TcR assembly in the endoplasmic reticulum and is required for transport to the cell surface. As to quaternary structure, (Microbial infection) Interacts with Staphylococcus aureus enterotoxin type B/SEB.

Its subcellular location is the cell membrane. In terms of biological role, v region of the variable domain of T cell receptor (TR) beta chain that participates in the antigen recognition. Alpha-beta T cell receptors are antigen specific receptors which are essential to the immune response and are present on the cell surface of T lymphocytes. Recognize peptide-major histocompatibility (MH) (pMH) complexes that are displayed by antigen presenting cells (APC), a prerequisite for efficient T cell adaptive immunity against pathogens. Binding of alpha-beta TR to pMH complex initiates TR-CD3 clustering on the cell surface and intracellular activation of LCK that phosphorylates the ITAM motifs of CD3G, CD3D, CD3E and CD247 enabling the recruitment of ZAP70. In turn ZAP70 phosphorylates LAT, which recruits numerous signaling molecules to form the LAT signalosome. The LAT signalosome propagates signal branching to three major signaling pathways, the calcium, the mitogen-activated protein kinase (MAPK) kinase and the nuclear factor NF-kappa-B (NF-kB) pathways, leading to the mobilization of transcription factors that are critical for gene expression and essential for T cell growth and differentiation. The T cell repertoire is generated in the thymus, by V-(D)-J rearrangement. This repertoire is then shaped by intrathymic selection events to generate a peripheral T cell pool of self-MH restricted, non-autoaggressive T cells. Post-thymic interaction of alpha-beta TR with the pMH complexes shapes TR structural and functional avidity. This chain is T cell receptor beta variable 19, found in Homo sapiens (Human).